The following is a 603-amino-acid chain: MTSSPPSTWRNLDENEALLRHPILNKYPGEDTRPTSKKELAGWYSYGWAAEVFAVCAMGSFLPITLEQMTRDQGVLLSDKKTPCSASWPTAPTAYAAADATASPRVGPPQCVIYVLGIEINTASFAMYTFSISVLIQSVLIISMSAAADHGVYRKKFLLAFALMGALSMILFLFLLPRFYLLAAVLAIIANTGFGASFVLLNSFLPVLVRNDPSIQATRYAAASDEQTYYTQNPSGSNTISPVDEPERLDVSSNDSALVSAELRLSTKLSSNGIGIGYIAAVLVQIGCILLVVATHSTTFSLRLVLFIIGLWWLVFTIPAALWLRPRPGPPVPDSAYGKGRWAWVSYIVFAWVSLGRTIVRARQLKDVLLFLAAWFLLSDGIATVSGTAVLFAKTQLGMNIAALGLINVIAMISGVLGAFSWSYISHHFNLRPSRTIVACICLFEVIPLYGLLGFLPFIKRLGVIGLQQPWEMYVLGAIYGLVLGGLSSYCRSFFGELIPPGFEASFYALYAITDKGSSMFGPAIVGAITDRYGEIRPAFGFLALLILLPLPLMLLVDVDRGKRDAKELAEALEGVKDMGTNGTGYATVATHEVEVGYEGDRE.

4 consecutive transmembrane segments (helical) span residues 46 to 66 (YGWA…PITL), 122 to 142 (TASF…VLII), 157 to 177 (FLLA…FLLP), and 181 to 201 (LLAA…FVLL). N254 carries an N-linked (GlcNAc...) asparagine glycan. The next 8 helical transmembrane spans lie at 274–294 (IGIG…LVVA), 304–324 (LVLF…ALWL), 342–362 (WAWV…IVRA), 368–388 (VLLF…VSGT), 401–421 (IAAL…GAFS), 439–459 (ACIC…LPFI), 464–484 (VIGL…GLVL), and 539–559 (AFGF…LVDV). A glycan (N-linked (GlcNAc...) asparagine) is linked at N582.

It belongs to the ATG22 family.

It localises to the vacuole membrane. In terms of biological role, vacuolar effluxer which mediate the efflux of amino acids resulting from autophagic degradation. The release of autophagic amino acids allows the maintenance of protein synthesis and viability during nitrogen starvation. This is Autophagy-related protein 22 (ATG22) from Coccidioides immitis (strain RS) (Valley fever fungus).